The sequence spans 632 residues: Signal-transduction and transcriptional-control protein (632 aa).

In terms of domain architecture, PAS spans 197 to 270 (TYQYLNKITD…GQSYEDEEIM (74 aa)). In terms of domain architecture, Sigma-54 factor interaction spans 324 to 554 (IIGQSEAMKR…LENCIENIVN (231 aa)). Residues 352-359 (GESGTGKE) and 416-425 (ANEGTLFLDE) contribute to the ATP site. Positions 606–625 (ISKACRILGINRSTLYIKIK) form a DNA-binding region, H-T-H motif.

The sequence is that of Signal-transduction and transcriptional-control protein (stc) from Clostridium beijerinckii (Clostridium MP).